The chain runs to 354 residues: Protein-glutamate methylesterase/protein-glutamine glutaminase (354 aa).

The region spanning 7 to 124 (KVLCVDDSAL…REGMLEYTEM (118 aa)) is the Response regulatory domain. D58 is subject to 4-aspartylphosphate. The CheB-type methylesterase domain maps to 156–348 (LLSSEKVIII…AALMKRAEAS (193 aa)). Active-site residues include S168, H194, and D290.

The protein belongs to the CheB family. Phosphorylated by CheA. Phosphorylation of the N-terminal regulatory domain activates the methylesterase activity.

It is found in the cytoplasm. It catalyses the reaction [protein]-L-glutamate 5-O-methyl ester + H2O = L-glutamyl-[protein] + methanol + H(+). The enzyme catalyses L-glutaminyl-[protein] + H2O = L-glutamyl-[protein] + NH4(+). Involved in chemotaxis. Part of a chemotaxis signal transduction system that modulates chemotaxis in response to various stimuli. Catalyzes the demethylation of specific methylglutamate residues introduced into the chemoreceptors (methyl-accepting chemotaxis proteins or MCP) by CheR. Also mediates the irreversible deamidation of specific glutamine residues to glutamic acid. This is Protein-glutamate methylesterase/protein-glutamine glutaminase from Chromohalobacter salexigens (strain ATCC BAA-138 / DSM 3043 / CIP 106854 / NCIMB 13768 / 1H11).